We begin with the raw amino-acid sequence, 273 residues long: Large ribosomal subunit protein uL2 (273 aa).

2 disordered regions span residues 28-53 (KPFA…TTRH) and 221-273 (RGTA…RRSK). The span at 39-48 (KSGGRNNNGR) shows a compositional bias: low complexity. Residue Lys-242 is modified to N6-acetyllysine.

This sequence belongs to the universal ribosomal protein uL2 family. Part of the 50S ribosomal subunit. Forms a bridge to the 30S subunit in the 70S ribosome.

One of the primary rRNA binding proteins. Required for association of the 30S and 50S subunits to form the 70S ribosome, for tRNA binding and peptide bond formation. It has been suggested to have peptidyltransferase activity; this is somewhat controversial. Makes several contacts with the 16S rRNA in the 70S ribosome. In Escherichia coli (strain SE11), this protein is Large ribosomal subunit protein uL2.